The chain runs to 379 residues: Nematocin receptor 1 (379 aa).

Residues 19–48 (HNLYLFQMLELQENITDSQPMDPPSLEIMM) are Extracellular-facing. The N-linked (GlcNAc...) asparagine glycan is linked to asparagine 32. A helical transmembrane segment spans residues 49 to 69 (LHHLMIILVTLFGNTLLIYVI). Topologically, residues 70–95 (YKNNAVLRRKRVTPVQMLMLHMCAAD) are cytoplasmic. Residues 96–116 (ILFALISVGPTMAITATVPFF) form a helical membrane-spanning segment. Topologically, residues 117–124 (YGPNLLCK) are extracellular. A disulfide bridge links cysteine 123 with cysteine 196. A helical transmembrane segment spans residues 125-145 (LTKFLQVIPMYASSFLLVAIS). Residues 146-168 (ADRYQAICRPLASMKSSIYNRPA) are Cytoplasmic-facing. The helical transmembrane segment at 169–189 (LYSGIAWTAAILFSTPQLYLF) threads the bilayer. Over 190–207 (EKRNGDCSENYTTALQYQ) the chain is Extracellular. Asparagine 199 carries an N-linked (GlcNAc...) asparagine glycan. Residues 208 to 228 (LYVCLFNSVVWLLPSAIAGWL) traverse the membrane as a helical segment. Topologically, residues 229 to 289 (YLCVCKAVWK…DRRRVQTVKL (61 aa)) are cytoplasmic. The helical transmembrane segment at 290-310 (TLTIVAANFVLWAPFCITSVI) threads the bilayer. Topologically, residues 311-320 (DAVWPTAINS) are extracellular. A glycan (N-linked (GlcNAc...) asparagine) is linked at asparagine 319. The chain crosses the membrane as a helical span at residues 321-343 (TFATYIMFFGNLNSCMNPWLWFH). At 344–379 (FNRKQLKRACPCRKSSEPLIQSLVYVHVMTSEQSDF) the chain is on the cytoplasmic side.

This sequence belongs to the G-protein coupled receptor 1 family. Vasopressin/oxytocin receptor subfamily. As to expression, detected in the left ASE gustatory neuron, the chemosensory neuron pairs ASH and ADF, and the PQR tail neuron. In males, detected in hook and tail sensory neurons involved in vulval sensing and hermaphrodite contact, and in spicule protractor muscles.

It localises to the cell membrane. In terms of biological role, receptor for nematocin. The activity of this receptor is mediated by G proteins which activate a phosphatidylinositol-calcium second messenger system. The activity of this receptor may be modulated by ntr-2, leading to reduced intracellular cAMP production. Plays a role in gustatory associative learning. Also plays a role in male mating behavior. The sequence is that of Nematocin receptor 1 from Caenorhabditis elegans.